The following is a 118-amino-acid chain: UPF0102 protein Dtur_1530 (118 aa).

Belongs to the UPF0102 family.

The polypeptide is UPF0102 protein Dtur_1530 (Dictyoglomus turgidum (strain DSM 6724 / Z-1310)).